The following is a 500-amino-acid chain: Probable E3 ubiquitin-protein ligase ARI16 (500 aa).

The interval 74 to 288 (NSNSSSADRE…QGNWNCSPVA (215 aa)) is TRIAD supradomain. The segment at 78-130 (SSADRETGDGDYLVSTPFCSHKFSTTCWSEYLSDALKKNKEQRGLISCLSQDC) adopts an RING-type 1 zinc-finger fold. Residues Cys96, His98, Cys125, Cys130, Cys169, Cys174, Cys194, Cys196, Cys201, Cys204, His209, Cys214, Cys241, Cys244, Cys261, Cys263, Cys268, Cys271, His278, and Cys284 each coordinate Zn(2+). Residues 148–214 (EMYENYILES…GLESHRPVSC (67 aa)) form an IBR-type zinc finger. An RING-type 2; atypical zinc finger spans residues 241-271 (CPKCKIPVQQNGDPNYRLINCICSNNFCWIC). A RanBP2-type zinc finger spans residues 453–483 (EPGSRWFCDRCTFENSWVDKQCKMCFFPLDY).

It belongs to the RBR family. Ariadne subfamily. It depends on Zn(2+) as a cofactor. Preferentially expressed in green siliques.

The catalysed reaction is [E2 ubiquitin-conjugating enzyme]-S-ubiquitinyl-L-cysteine + [acceptor protein]-L-lysine = [E2 ubiquitin-conjugating enzyme]-L-cysteine + [acceptor protein]-N(6)-ubiquitinyl-L-lysine.. It functions in the pathway protein modification; protein ubiquitination. Its function is as follows. Might act as an E3 ubiquitin-protein ligase, or as part of E3 complex, which accepts ubiquitin from specific E2 ubiquitin-conjugating enzymes and then transfers it to substrates. This chain is Probable E3 ubiquitin-protein ligase ARI16 (ARI16), found in Arabidopsis thaliana (Mouse-ear cress).